We begin with the raw amino-acid sequence, 184 residues long: ATP synthase subunit b, chloroplastic (184 aa).

Residues 27–49 (LATNPINLSVVFGVLIFFGKGVL) traverse the membrane as a helical segment.

The protein belongs to the ATPase B chain family. F-type ATPases have 2 components, F(1) - the catalytic core - and F(0) - the membrane proton channel. F(1) has five subunits: alpha(3), beta(3), gamma(1), delta(1), epsilon(1). F(0) has four main subunits: a(1), b(1), b'(1) and c(10-14). The alpha and beta chains form an alternating ring which encloses part of the gamma chain. F(1) is attached to F(0) by a central stalk formed by the gamma and epsilon chains, while a peripheral stalk is formed by the delta, b and b' chains.

The protein resides in the plastid. It is found in the chloroplast thylakoid membrane. Functionally, f(1)F(0) ATP synthase produces ATP from ADP in the presence of a proton or sodium gradient. F-type ATPases consist of two structural domains, F(1) containing the extramembraneous catalytic core and F(0) containing the membrane proton channel, linked together by a central stalk and a peripheral stalk. During catalysis, ATP synthesis in the catalytic domain of F(1) is coupled via a rotary mechanism of the central stalk subunits to proton translocation. Its function is as follows. Component of the F(0) channel, it forms part of the peripheral stalk, linking F(1) to F(0). The chain is ATP synthase subunit b, chloroplastic from Draba nemorosa (Woodland whitlowgrass).